A 283-amino-acid chain; its full sequence is Pantoate--beta-alanine ligase (283 aa).

Belongs to the pantothenate synthetase family.

It carries out the reaction (R)-pantoate + beta-alanine + ATP = (R)-pantothenate + AMP + diphosphate + H(+). The protein operates within cofactor biosynthesis; (R)-pantothenate biosynthesis; (R)-pantothenate from (R)-pantoate and beta-alanine: step 1/1. This is Pantoate--beta-alanine ligase (pan6) from Schizosaccharomyces pombe (strain 972 / ATCC 24843) (Fission yeast).